A 542-amino-acid chain; its full sequence is Esterase 6 (542 aa).

The signal sequence occupies residues 1–19 (MNYVGLIIVLSCLWLGSNA). N-linked (GlcNAc...) asparagine glycosylation is present at Asn40. An intrachain disulfide couples Cys84 to Cys103. Ser207 serves as the catalytic Acyl-ester intermediate. A disulfide bond links Cys259 and Cys271. Asn418 and Asn454 each carry an N-linked (GlcNAc...) asparagine glycan. His464 (charge relay system) is an active-site residue. A disulfide bond links Cys512 and Cys533.

It belongs to the type-B carboxylesterase/lipase family. As to quaternary structure, monomer.

The protein resides in the secreted. It carries out the reaction a carboxylic ester + H2O = an alcohol + a carboxylate + H(+). Transferred from the ejaculatory bulbs of males to the female genitals upon copulation, plays an important role in the reproductive biology. The polypeptide is Esterase 6 (Est-6) (Drosophila simulans (Fruit fly)).